The chain runs to 68 residues: Guanine nucleotide-binding protein G(I)/G(S)/G(O) subunit gamma-5B (68 aa).

One can recognise a G protein gamma domain in the interval 3–68; it reads GFSSVAATKK…FRPQKVCSFL (66 aa). C65 is modified (cysteine methyl ester). A lipid anchor (S-geranylgeranyl cysteine) is attached at C65. Residues 66-68 constitute a propeptide, removed in mature form; sequence SFL.

This sequence belongs to the G protein gamma family. In terms of assembly, g proteins are composed of 3 units; alpha, beta and gamma.

The protein localises to the cell membrane. In terms of biological role, guanine nucleotide-binding proteins (G proteins) are involved as a modulator or transducer in various transmembrane signaling systems. The beta and gamma chains are required for the GTPase activity, for replacement of GDP by GTP, and for G protein-effector interaction. The chain is Guanine nucleotide-binding protein G(I)/G(S)/G(O) subunit gamma-5B from Homo sapiens (Human).